Consider the following 233-residue polypeptide: Lipoprotein-releasing system ATP-binding protein LolD (233 aa).

The 224-residue stretch at 10 to 233 (YRLEGVGKEY…AGELYDQHRP (224 aa)) folds into the ABC transporter domain. 46 to 53 (GASGSGKS) provides a ligand contact to ATP.

This sequence belongs to the ABC transporter superfamily. Lipoprotein translocase (TC 3.A.1.125) family. In terms of assembly, the complex is composed of two ATP-binding proteins (LolD) and two transmembrane proteins (LolC and LolE).

It is found in the cell inner membrane. Part of the ABC transporter complex LolCDE involved in the translocation of mature outer membrane-directed lipoproteins, from the inner membrane to the periplasmic chaperone, LolA. Responsible for the formation of the LolA-lipoprotein complex in an ATP-dependent manner. The sequence is that of Lipoprotein-releasing system ATP-binding protein LolD from Nitratidesulfovibrio vulgaris (strain ATCC 29579 / DSM 644 / CCUG 34227 / NCIMB 8303 / VKM B-1760 / Hildenborough) (Desulfovibrio vulgaris).